The following is a 326-amino-acid chain: Phospho-N-acetylmuramoyl-pentapeptide-transferase (326 aa).

Transmembrane regions (helical) follow at residues 3–23 (ISISAGIVTFLLTLVGIPAFI), 51–71 (TMGGLVFLIAAVVVSFLVALF), 79–99 (VGMILFILVLYGLVGFLDDFL), 115–135 (LALQLLGGVIFYLFYERGGDM), 138–158 (VFGYQVHLGIFYIIFALFWLV), 169–189 (GIDGLASISVVISLSAYGVIA), 195–215 (MDILLVIFAMIGGLLGFFVFN), 221–243 (VFMGDVGSLALGGMLAAISMALH), and 306–326 (FFFWGVGLLASLLTFAILYLM).

The protein belongs to the glycosyltransferase 4 family. MraY subfamily. It depends on Mg(2+) as a cofactor.

Its subcellular location is the cell membrane. It carries out the reaction UDP-N-acetyl-alpha-D-muramoyl-L-alanyl-gamma-D-glutamyl-L-lysyl-D-alanyl-D-alanine + di-trans,octa-cis-undecaprenyl phosphate = Mur2Ac(oyl-L-Ala-gamma-D-Glu-L-Lys-D-Ala-D-Ala)-di-trans,octa-cis-undecaprenyl diphosphate + UMP. The protein operates within cell wall biogenesis; peptidoglycan biosynthesis. Its function is as follows. Catalyzes the initial step of the lipid cycle reactions in the biosynthesis of the cell wall peptidoglycan: transfers peptidoglycan precursor phospho-MurNAc-pentapeptide from UDP-MurNAc-pentapeptide onto the lipid carrier undecaprenyl phosphate, yielding undecaprenyl-pyrophosphoryl-MurNAc-pentapeptide, known as lipid I. The protein is Phospho-N-acetylmuramoyl-pentapeptide-transferase of Streptococcus pneumoniae (strain Taiwan19F-14).